We begin with the raw amino-acid sequence, 412 residues long: Histone-lysine N-methyltransferase SUV39H1 (412 aa).

Residues 1–89 (MAENLKGCSV…LKCVRILKQF (89 aa)) form an interaction with SIRT1 region. The Chromo domain maps to 43–101 (FEVEYLCDYKKIREQEYYLVKWRGYPDSESTWEPRQNLKCVRILKQFHKDLERELLRRH). Residues 179–240 (VGCECQDCLW…DCPNRVVQKG (62 aa)) enclose the Pre-SET domain. The Zn(2+) site is built by Cys-181, Cys-183, Cys-186, Cys-194, Cys-195, Cys-222, Cys-226, Cys-228, and Cys-232. One can recognise an SET domain in the interval 243 to 366 (YDLCIFRTDD…AGEELTFDYN (124 aa)). 254–256 (RGW) contributes to the S-adenosyl-L-methionine binding site. The interval 255 to 377 (GWGVRTLEKI…QVDPVDMEST (123 aa)) is mediates interaction with MECOM. Lys-266 is modified (N6-acetyllysine). Residues Tyr-297 and 323-324 (NH) each bind S-adenosyl-L-methionine. Cys-326 contacts Zn(2+). A Phosphoserine modification is found at Ser-391. The region spanning 396–412 (VRIECKCGTESCRKYLF) is the Post-SET domain. Residues Cys-400, Cys-402, and Cys-407 each coordinate Zn(2+).

This sequence belongs to the class V-like SAM-binding methyltransferase superfamily. Histone-lysine methyltransferase family. Suvar3-9 subfamily. As to quaternary structure, interacts with H3 and H4 histones. Interacts with GFI1B, DNMT3B, CBX1, CBX4, CCAR2, MBD1, RUNX1, RUNX3, MYOD1, SMAD5 and RB1. Interacts with SBF1 through the SET domain. Interacts with HDAC1 and HDAC2 through the N-terminus and associates with the core histone deacetylase complex composed of HDAC1, HDAC2, RBBP4 and RBBP7. Component of the eNoSC complex, composed of SIRT1, SUV39H1 and RRP8. Interacts (via SET domain) with MECOM; enhances MECOM transcriptional repression activity. Interacts with LMNA; the interaction increases stability of SUV39H1. The large PER complex involved in the histone methylation is composed of at least PER2, CBX3, TRIM28, SUV39H1 and/or SUV39H2; CBX3 mediates the formation of the complex. In terms of assembly, (Microbial infection) Interacts with HTLV-1 Tax protein, leading to abrogate Tax transactivation of HTLV-1 LTR. Post-translationally, phosphorylated on serine residues, and to a lesser degree, on threonine residues. The phosphorylated form is stabilized by SBF1 and is less active in its transcriptional repressor function. Ubiquitinated by the DCX(DCAF13) E3 ubiquitin ligase complex, leading to its degradation. In terms of processing, acetylated at Lys-266, leading to inhibition of enzyme activity. SIRT1-mediated deacetylation relieves this inhibition. Post-translationally, (Microbial infection) A higher molecular weight form is also seen in M.bovis infected cells.

Its subcellular location is the nucleus. It localises to the nucleus lamina. The protein localises to the nucleoplasm. The protein resides in the chromosome. It is found in the centromere. Its subcellular location is the cytoplasmic vesicle. It localises to the phagosome lumen. The protein localises to the cell membrane. The enzyme catalyses L-lysyl(9)-[histone H3] + 3 S-adenosyl-L-methionine = N(6),N(6),N(6)-trimethyl-L-lysyl(9)-[histone H3] + 3 S-adenosyl-L-homocysteine + 3 H(+). With respect to regulation, inhibited by S-adenosyl-L-homocysteine. Negatively regulated by CCAR2. Functionally, histone methyltransferase that specifically trimethylates 'Lys-9' of histone H3 using monomethylated H3 'Lys-9' as substrate. Also weakly methylates histone H1 (in vitro). H3 'Lys-9' trimethylation represents a specific tag for epigenetic transcriptional repression by recruiting HP1 (CBX1, CBX3 and/or CBX5) proteins to methylated histones. Mainly functions in heterochromatin regions, thereby playing a central role in the establishment of constitutive heterochromatin at pericentric and telomere regions. H3 'Lys-9' trimethylation is also required to direct DNA methylation at pericentric repeats. SUV39H1 is targeted to histone H3 via its interaction with RB1 and is involved in many processes, such as repression of MYOD1-stimulated differentiation, regulation of the control switch for exiting the cell cycle and entering differentiation, repression by the PML-RARA fusion protein, BMP-induced repression, repression of switch recombination to IgA and regulation of telomere length. Component of the eNoSC (energy-dependent nucleolar silencing) complex, a complex that mediates silencing of rDNA in response to intracellular energy status and acts by recruiting histone-modifying enzymes. The eNoSC complex is able to sense the energy status of cell: upon glucose starvation, elevation of NAD(+)/NADP(+) ratio activates SIRT1, leading to histone H3 deacetylation followed by dimethylation of H3 at 'Lys-9' (H3K9me2) by SUV39H1 and the formation of silent chromatin in the rDNA locus. Recruited by the large PER complex to the E-box elements of the circadian target genes such as PER2 itself or PER1, contributes to the conversion of local chromatin to a heterochromatin-like repressive state through H3 'Lys-9' trimethylation. (Microbial infection) Plays a role in defense against mycobacterial infections. Methylates M.tuberculosis HupB on 'Lys-140', probably methylates HupB of M.bovis also. Methylation has an inhibitory effect on mycobacterial growth in the host. Macrophages expressing about 60% SUV39H1 are slightly more susceptible to M.bovis or M.tuberculosis infection. Chaetocin (an inhibitor of this enzyme) increases macrophage survival of M.tuberculosis. This protein inhibits biofilm formation by M.tuberculosis via 'Lys-140' trimethylation. The protein is Histone-lysine N-methyltransferase SUV39H1 (SUV39H1) of Homo sapiens (Human).